The primary structure comprises 102 residues: ATP-dependent Clp protease adapter protein ClpS (102 aa).

It belongs to the ClpS family. In terms of assembly, binds to the N-terminal domain of the chaperone ClpA.

In terms of biological role, involved in the modulation of the specificity of the ClpAP-mediated ATP-dependent protein degradation. In Shewanella baltica (strain OS155 / ATCC BAA-1091), this protein is ATP-dependent Clp protease adapter protein ClpS.